The chain runs to 131 residues: Holo-[acyl-carrier-protein] synthase (131 aa).

Asp-8 and Glu-58 together coordinate Mg(2+).

Belongs to the P-Pant transferase superfamily. AcpS family. It depends on Mg(2+) as a cofactor.

The protein resides in the cytoplasm. It carries out the reaction apo-[ACP] + CoA = holo-[ACP] + adenosine 3',5'-bisphosphate + H(+). Functionally, transfers the 4'-phosphopantetheine moiety from coenzyme A to a Ser of acyl-carrier-protein. The chain is Holo-[acyl-carrier-protein] synthase from Oenococcus oeni (strain ATCC BAA-331 / PSU-1).